The following is a 207-amino-acid chain: Ribonuclease HII (207 aa).

The RNase H type-2 domain occupies 18–207; the sequence is TYLSGSDEAG…PIKKISKETS (190 aa). 3 residues coordinate a divalent metal cation: Asp-24, Glu-25, and Asp-116.

It belongs to the RNase HII family. It depends on Mn(2+) as a cofactor. Requires Mg(2+) as cofactor.

The protein resides in the cytoplasm. The enzyme catalyses Endonucleolytic cleavage to 5'-phosphomonoester.. Functionally, endonuclease that specifically degrades the RNA of RNA-DNA hybrids. The polypeptide is Ribonuclease HII (Mycoplasma capricolum subsp. capricolum (strain California kid / ATCC 27343 / NCTC 10154)).